A 313-amino-acid chain; its full sequence is Methionyl-tRNA formyltransferase (313 aa).

113-116 (SLLP) serves as a coordination point for (6S)-5,6,7,8-tetrahydrofolate.

Belongs to the Fmt family.

The enzyme catalyses L-methionyl-tRNA(fMet) + (6R)-10-formyltetrahydrofolate = N-formyl-L-methionyl-tRNA(fMet) + (6S)-5,6,7,8-tetrahydrofolate + H(+). Functionally, attaches a formyl group to the free amino group of methionyl-tRNA(fMet). The formyl group appears to play a dual role in the initiator identity of N-formylmethionyl-tRNA by promoting its recognition by IF2 and preventing the misappropriation of this tRNA by the elongation apparatus. The sequence is that of Methionyl-tRNA formyltransferase from Francisella tularensis subsp. mediasiatica (strain FSC147).